Consider the following 427-residue polypeptide: Peptidase B (427 aa).

Mn(2+)-binding residues include K195 and D200. Residue K207 is part of the active site. 3 residues coordinate Mn(2+): D218, D277, and E279. R281 is a catalytic residue.

Belongs to the peptidase M17 family. As to quaternary structure, homohexamer. Requires Mn(2+) as cofactor.

Its subcellular location is the cytoplasm. The enzyme catalyses Release of an N-terminal amino acid, Xaa, from a peptide or arylamide. Xaa is preferably Glu or Asp but may be other amino acids, including Leu, Met, His, Cys and Gln.. Its function is as follows. Probably plays an important role in intracellular peptide degradation. This Escherichia coli (strain ATCC 8739 / DSM 1576 / NBRC 3972 / NCIMB 8545 / WDCM 00012 / Crooks) protein is Peptidase B.